Consider the following 225-residue polypeptide: Histone H1.5 (225 aa).

The disordered stretch occupies residues Met-1–Lys-23. Residue Ser-2 is modified to N-acetylserine. Over residues Thr-9–Ser-19 the composition is skewed to low complexity. Positions Ala-37–Val-113 constitute an H15 domain. Residues Lys-145 to Val-156 are compositionally biased toward basic and acidic residues. The disordered stretch occupies residues Lys-145–Ala-225. Over residues Lys-157–Lys-175 the composition is skewed to basic residues. Low complexity predominate over residues Lys-176–Ala-208.

Belongs to the histone H1/H5 family.

It is found in the nucleus. It localises to the chromosome. Its function is as follows. Histones H1 are necessary for the condensation of nucleosome chains into higher-order structures. The chain is Histone H1.5 (hil-5) from Caenorhabditis elegans.